The primary structure comprises 163 residues: Nucleotide-binding protein KPK_4305 (163 aa).

It belongs to the YajQ family.

Nucleotide-binding protein. This chain is Nucleotide-binding protein KPK_4305, found in Klebsiella pneumoniae (strain 342).